We begin with the raw amino-acid sequence, 190 residues long: Major intrinsically disordered NOTCH2-binding receptor 1-like (190 aa).

Residue S79 is modified to Phosphoserine. Residues N109 and N125 are each glycosylated (N-linked (GlcNAc...) asparagine). The helical transmembrane segment at 169–189 (GLILLVVISILVTIVTIITFF) threads the bilayer.

Belongs to the MINAR family. Interacts with NOTCH2. In terms of tissue distribution, highly expressed in the auditory hair cells.

The protein localises to the lysosome membrane. The protein resides in the endoplasmic reticulum membrane. Its function is as follows. Binds cholesterol and may regulate the distribution and homeostasis of cholesterol in hair cells. May play a role in angiogenesis. The sequence is that of Major intrinsically disordered NOTCH2-binding receptor 1-like from Homo sapiens (Human).